The following is a 353-amino-acid chain: Uroporphyrinogen decarboxylase (353 aa).

Residues 26-30, Asp75, Tyr161, Ser216, and His332 each bind substrate; that span reads RQAGR.

It belongs to the uroporphyrinogen decarboxylase family. As to quaternary structure, homodimer.

Its subcellular location is the cytoplasm. It catalyses the reaction uroporphyrinogen III + 4 H(+) = coproporphyrinogen III + 4 CO2. It functions in the pathway porphyrin-containing compound metabolism; protoporphyrin-IX biosynthesis; coproporphyrinogen-III from 5-aminolevulinate: step 4/4. In terms of biological role, catalyzes the decarboxylation of four acetate groups of uroporphyrinogen-III to yield coproporphyrinogen-III. The sequence is that of Uroporphyrinogen decarboxylase from Gluconacetobacter diazotrophicus (strain ATCC 49037 / DSM 5601 / CCUG 37298 / CIP 103539 / LMG 7603 / PAl5).